An 85-amino-acid polypeptide reads, in one-letter code: Conotoxin Lv15a (85 aa).

An N-terminal signal peptide occupies residues 1-23; sequence MEKLTVLILVATVLLMIQVLAQS. A propeptide spanning residues 24-49 is cleaved from the precursor; it reads GGDKHLKRRPKQYATKRLSALMRGHR. Pyrrolidone carboxylic acid is present on glutamine 50.

Belongs to the conotoxin O2 superfamily. Post-translationally, contains 4 disulfide bonds. Expressed by the venom duct.

It localises to the secreted. This is Conotoxin Lv15a from Conus lividus (Livid cone).